Reading from the N-terminus, the 255-residue chain is Imidazole glycerol phosphate synthase subunit HisF (255 aa).

Catalysis depends on residues aspartate 11 and aspartate 130.

The protein belongs to the HisA/HisF family. In terms of assembly, heterodimer of HisH and HisF.

The protein localises to the cytoplasm. The enzyme catalyses 5-[(5-phospho-1-deoxy-D-ribulos-1-ylimino)methylamino]-1-(5-phospho-beta-D-ribosyl)imidazole-4-carboxamide + L-glutamine = D-erythro-1-(imidazol-4-yl)glycerol 3-phosphate + 5-amino-1-(5-phospho-beta-D-ribosyl)imidazole-4-carboxamide + L-glutamate + H(+). It participates in amino-acid biosynthesis; L-histidine biosynthesis; L-histidine from 5-phospho-alpha-D-ribose 1-diphosphate: step 5/9. Functionally, IGPS catalyzes the conversion of PRFAR and glutamine to IGP, AICAR and glutamate. The HisF subunit catalyzes the cyclization activity that produces IGP and AICAR from PRFAR using the ammonia provided by the HisH subunit. The sequence is that of Imidazole glycerol phosphate synthase subunit HisF from Synechococcus sp. (strain ATCC 27144 / PCC 6301 / SAUG 1402/1) (Anacystis nidulans).